Reading from the N-terminus, the 344-residue chain is N-acetyl-gamma-glutamyl-phosphate reductase (344 aa).

Residue C150 is part of the active site.

Belongs to the NAGSA dehydrogenase family. Type 1 subfamily.

The protein localises to the cytoplasm. The catalysed reaction is N-acetyl-L-glutamate 5-semialdehyde + phosphate + NADP(+) = N-acetyl-L-glutamyl 5-phosphate + NADPH + H(+). It functions in the pathway amino-acid biosynthesis; L-arginine biosynthesis; N(2)-acetyl-L-ornithine from L-glutamate: step 3/4. In terms of biological role, catalyzes the NADPH-dependent reduction of N-acetyl-5-glutamyl phosphate to yield N-acetyl-L-glutamate 5-semialdehyde. The chain is N-acetyl-gamma-glutamyl-phosphate reductase from Pseudomonas aeruginosa (strain UCBPP-PA14).